An 828-amino-acid chain; its full sequence is Periplasmic nitrate reductase (828 aa).

A signal peptide (tat-type signal) is located at residues 1-31; sequence MKLSRRSFMKANAVAAAAAAAGLSVPGVARA. Residues 39–95 enclose the 4Fe-4S Mo/W bis-MGD-type domain; sequence IKWDKAPCRFCGTGCGVLVGTQQGRVVACQGDPDAPVNRGLNCIKGYFLPKIMYGKD. [4Fe-4S] cluster contacts are provided by cysteine 46, cysteine 49, cysteine 53, and cysteine 81. Mo-bis(molybdopterin guanine dinucleotide) contacts are provided by residues lysine 83, glutamine 150, asparagine 175, cysteine 179, 212-219, 243-247, 262-264, methionine 372, glutamine 376, asparagine 482, 508-509, lysine 531, aspartate 558, and 718-727; these read WGSNMAEM, STFQH, QSD, SD, and TGRVLEHWHT. Phenylalanine 794 contributes to the substrate binding site. Positions 802 and 819 each coordinate Mo-bis(molybdopterin guanine dinucleotide).

Belongs to the prokaryotic molybdopterin-containing oxidoreductase family. NasA/NapA/NarB subfamily. As to quaternary structure, component of the periplasmic nitrate reductase NapAB complex composed of NapA and NapB. [4Fe-4S] cluster serves as cofactor. Mo-bis(molybdopterin guanine dinucleotide) is required as a cofactor. Post-translationally, predicted to be exported by the Tat system. The position of the signal peptide cleavage has not been experimentally proven.

It localises to the periplasm. It carries out the reaction 2 Fe(II)-[cytochrome] + nitrate + 2 H(+) = 2 Fe(III)-[cytochrome] + nitrite + H2O. In terms of biological role, catalytic subunit of the periplasmic nitrate reductase complex NapAB. Receives electrons from NapB and catalyzes the reduction of nitrate to nitrite. In Salmonella schwarzengrund (strain CVM19633), this protein is Periplasmic nitrate reductase.